Reading from the N-terminus, the 177-residue chain is MPGDPTATAKGNEIPDTLMGYIPWTPELDSGEVCGIPTTFKTRDEWKGKKVVIVSIPGAYTPICHQQHIPPLVKRVDELKAKGVDAVYVIASNDPFVMAAWGNFNNAKDKVVFATDIDLAFSKALGATIDLSAKHFGERTARYALIIDDNKIVDFASDEGDTGKLQNASIDTILTKV.

A Thioredoxin domain is found at 8-177 (TAKGNEIPDT…ASIDTILTKV (170 aa)). The active-site Cysteine sulfenic acid (-SOH) intermediate is the cysteine 64. The Microbody targeting signal motif lies at 175-177 (TKV).

It belongs to the peroxiredoxin family. Prx5 subfamily. In terms of assembly, homodimer; disulfide-linked, upon oxidation.

It carries out the reaction a hydroperoxide + [thioredoxin]-dithiol = an alcohol + [thioredoxin]-disulfide + H2O. Thiol-specific peroxidase that catalyzes the reduction of hydrogen peroxide and organic hydroperoxides to water and alcohols, respectively. Plays a role in cell protection against oxidative stress by detoxifying peroxides and as sensor of hydrogen peroxide-mediated signaling events. In Malassezia furfur (Pityriasis versicolor infection agent), this protein is Putative peroxiredoxin.